The sequence spans 499 residues: T-cell activation inhibitor, mitochondrial (499 aa).

A coiled-coil region spans residues 206–233 (LRNSLPLRKELDRLKNELSELLQLSDIR).

As to expression, expressed in peripheral blood leukocytes, mainly in T-lymphocytes.

It localises to the mitochondrion. Functionally, may regulate T-cell apoptosis. This chain is T-cell activation inhibitor, mitochondrial (TCAIM), found in Mus musculus (Mouse).